The primary structure comprises 245 residues: Peroxisome biogenesis protein 19-2 (245 aa).

The interval 17–106 (ALDDFKDLNL…LSSKQQPTGS (90 aa)) is disordered. 2 stretches are compositionally biased toward basic and acidic residues: residues 33–44 (VKKEEGDKKETE) and 71–92 (AKEDHVTEALDKLREQTRETVK). The segment covering 96-105 (SLSSKQQPTG) has biased composition (polar residues). Cys242 is modified (cysteine methyl ester). Cys242 is lipidated: S-farnesyl cysteine. The propeptide at 243–245 (CVM) is removed in mature form.

Belongs to the peroxin-19 family. In terms of assembly, dimer. Interacts with PEX10 (via C-terminus). Post-translationally, may be farnesylated. As to expression, expressed in roots, leaves, flowers, siliques and stems. Highest expression in roots and leaves.

Its subcellular location is the cytoplasm. The protein resides in the peroxisome membrane. Contributes to morphology determination of peroxisomes, but not to import of peroxisomal matrix proteins. Required for proper post-translational import and stabilization of peroxisomal membrane proteins (PMPs). Acts as a cytosolic import receptor for PMPs and delivers them to the docking factor PEX3 at the peroxisomal membrane for subsequent insertion into the membrane. Acts as a chaperone in stabilizing or maintaining PMPs in the lipid bilayer. This Arabidopsis thaliana (Mouse-ear cress) protein is Peroxisome biogenesis protein 19-2 (PEX19-2).